Here is a 152-residue protein sequence, read N- to C-terminus: Superoxide dismutase [Cu-Zn] (152 aa).

Ser2 bears the N-acetylserine mark. His44, His46, and His61 together coordinate Cu cation. The cysteines at positions 55 and 144 are disulfide-linked. 4 residues coordinate Zn(2+): His61, His69, His78, and Asp81. His118 is a Cu cation binding site.

This sequence belongs to the Cu-Zn superoxide dismutase family. Monomer. Cu cation is required as a cofactor. The cofactor is Zn(2+).

The protein resides in the cytoplasm. It carries out the reaction 2 superoxide + 2 H(+) = H2O2 + O2. Inhibited by KCN and diethyldithiocarbamate. Destroys radicals which are normally produced within the cells and which are toxic to biological systems. The plasma superoxide dismutase has phagocytosis-stimulating activity and may play an important role in the biological defenses of the organism. The chain is Superoxide dismutase [Cu-Zn] from Halocynthia roretzi (Sea squirt).